The sequence spans 335 residues: ATP-dependent 6-phosphofructokinase (335 aa).

G11 contributes to the ATP binding site. 21 to 25 lines the ADP pocket; that stretch reads RAVVR. Residues 72–73 and 102–105 contribute to the ATP site; these read RY and GDGS. D103 contacts Mg(2+). Substrate is bound at residue 125-127; it reads TID. Residue D127 is the Proton acceptor of the active site. R154 lines the ADP pocket. Residues R162 and 169-171 each bind substrate; that span reads MGR. ADP is bound by residues 185–187 and 213–215; these read GAD and KKH. Residues E222, R244, and 250-253 contribute to the substrate site; that span reads HIQR.

It belongs to the phosphofructokinase type A (PFKA) family. ATP-dependent PFK group I subfamily. Prokaryotic clade 'B1' sub-subfamily. In terms of assembly, homotetramer. Mg(2+) serves as cofactor.

It localises to the cytoplasm. The enzyme catalyses beta-D-fructose 6-phosphate + ATP = beta-D-fructose 1,6-bisphosphate + ADP + H(+). The protein operates within carbohydrate degradation; glycolysis; D-glyceraldehyde 3-phosphate and glycerone phosphate from D-glucose: step 3/4. With respect to regulation, allosterically activated by ADP and other diphosphonucleosides, and allosterically inhibited by phosphoenolpyruvate. Catalyzes the phosphorylation of D-fructose 6-phosphate to fructose 1,6-bisphosphate by ATP, the first committing step of glycolysis. The polypeptide is ATP-dependent 6-phosphofructokinase (Streptococcus pneumoniae serotype 4 (strain ATCC BAA-334 / TIGR4)).